Here is a 246-residue protein sequence, read N- to C-terminus: Sensory transduction protein LytT (246 aa).

The 115-residue stretch at 3 to 117 (KVLVVDDEML…RIVQTLKKYK (115 aa)) folds into the Response regulatory domain. A 4-aspartylphosphate modification is found at Asp-54. Residues 142 to 246 (LALPIEESIV…AKELKKLLRI (105 aa)) enclose the HTH LytTR-type domain.

Phosphorylated by LytS.

Its subcellular location is the cytoplasm. Member of the two-component regulatory system LytS/LytT that probably regulates genes involved in cell wall metabolism. The sequence is that of Sensory transduction protein LytT (lytT) from Bacillus anthracis.